Reading from the N-terminus, the 475-residue chain is MSPQTETKASVGFKAGVKDYKLTYYTPEYQTLDTDILAAFRVTPQPGVPPEEAGAAVAAESSTGTWTTVWTDGLTSLDRYKGRCYHIDPVPGEENQYICYVAYPLDLFEEGSVTNMFTSIVGNVFGFKALRALRLEDLRIPVAYIKTFQGPPHGIQVERDKLNKYGRPLLGCTIKPKLGLSAKNYGRAVYECLRGGLDFTKDDENVNSQPFMRWRDRFLFCAEAIYKAQAETGEIKGHYLNATAGTCEEMIKRAVFARELGVPIVMHDYITGGFTANTSLAHYCRDNGLLLHIHRAMHAVIDRQKNHGMHFRVLAKALRLSGGDHIHAGTVVGKLEGEREITLGFVDLLRDDFTEKDRSRGIYFTQSWVSTPGVLPVASGGIHVWHMPALTEIFGDDSVLQFGGGTLGHPWGNAPGAVANRVALEACVQARNEGRDLAREGNTIIREACKWSPELAAACEVWKEIKFEFQAMDTI.

A propeptide spanning residues 1–2 is cleaved from the precursor; sequence MS. Pro-3 carries the post-translational modification N-acetylproline. At Lys-14 the chain carries N6,N6,N6-trimethyllysine. 2 residues coordinate substrate: Asn-123 and Thr-173. Residue Lys-175 is the Proton acceptor of the active site. Lys-177 serves as a coordination point for substrate. Lys-201, Asp-203, and Glu-204 together coordinate Mg(2+). Residue Lys-201 is modified to N6-carboxylysine. His-294 functions as the Proton acceptor in the catalytic mechanism. Positions 295, 327, and 379 each coordinate substrate.

The protein belongs to the RuBisCO large chain family. Type I subfamily. In terms of assembly, heterohexadecamer of 8 large chains and 8 small chains; disulfide-linked. The disulfide link is formed within the large subunit homodimers. Requires Mg(2+) as cofactor. The disulfide bond which can form in the large chain dimeric partners within the hexadecamer appears to be associated with oxidative stress and protein turnover.

Its subcellular location is the plastid. The protein localises to the chloroplast. It catalyses the reaction 2 (2R)-3-phosphoglycerate + 2 H(+) = D-ribulose 1,5-bisphosphate + CO2 + H2O. The catalysed reaction is D-ribulose 1,5-bisphosphate + O2 = 2-phosphoglycolate + (2R)-3-phosphoglycerate + 2 H(+). In terms of biological role, ruBisCO catalyzes two reactions: the carboxylation of D-ribulose 1,5-bisphosphate, the primary event in carbon dioxide fixation, as well as the oxidative fragmentation of the pentose substrate in the photorespiration process. Both reactions occur simultaneously and in competition at the same active site. In Stellaria media (Common chickweed), this protein is Ribulose bisphosphate carboxylase large chain.